The sequence spans 296 residues: tRNA dimethylallyltransferase (296 aa).

11-18 serves as a coordination point for ATP; that stretch reads GPTAVGKT. A substrate-binding site is contributed by 13 to 18; sequence TAVGKT. The segment at 36 to 39 is interaction with substrate tRNA; the sequence is DSQQ.

It belongs to the IPP transferase family. In terms of assembly, monomer. Mg(2+) is required as a cofactor.

The catalysed reaction is adenosine(37) in tRNA + dimethylallyl diphosphate = N(6)-dimethylallyladenosine(37) in tRNA + diphosphate. Functionally, catalyzes the transfer of a dimethylallyl group onto the adenine at position 37 in tRNAs that read codons beginning with uridine, leading to the formation of N6-(dimethylallyl)adenosine (i(6)A). This chain is tRNA dimethylallyltransferase, found in Streptococcus agalactiae serotype Ia (strain ATCC 27591 / A909 / CDC SS700).